A 247-amino-acid chain; its full sequence is Probable transcriptional regulatory protein Spro_2779 (247 aa).

The protein belongs to the TACO1 family.

It localises to the cytoplasm. The chain is Probable transcriptional regulatory protein Spro_2779 from Serratia proteamaculans (strain 568).